A 258-amino-acid chain; its full sequence is Probable N-acetylglucosaminyl-phosphatidylinositol de-N-acetylase (258 aa).

Positions 147 to 170 (KSSSTTTTSTTSSSSSSSSLSNRT) are disordered. Positions 148–170 (SSSTTTTSTTSSSSSSSSLSNRT) are enriched in low complexity.

The protein belongs to the PIGL family.

The protein localises to the endoplasmic reticulum membrane. It catalyses the reaction a 6-(N-acetyl-alpha-D-glucosaminyl)-1-(1,2-diacyl-sn-glycero-3-phospho)-1D-myo-inositol + H2O = a 6-(alpha-D-glucosaminyl)-1-(1,2-diacyl-sn-glycero-3-phospho)-1D-myo-inositol + acetate. The protein operates within glycolipid biosynthesis; glycosylphosphatidylinositol-anchor biosynthesis. Functionally, involved in the second step of GPI biosynthesis. De-N-acetylation of N-acetylglucosaminyl-phosphatidylinositol. The protein is Probable N-acetylglucosaminyl-phosphatidylinositol de-N-acetylase (pigl) of Dictyostelium discoideum (Social amoeba).